The sequence spans 348 residues: High mobility group protein 20A (348 aa).

Disordered stretches follow at residues 1–114 (MENL…YVRF) and 181–213 (SRKA…DTKE). 2 stretches are compositionally biased toward polar residues: residues 34–47 (SESS…QPVN) and 56–71 (SQVQ…TAEN). Basic and acidic residues predominate over residues 72 to 82 (TEQKPEEEQQR). Residues 83 to 97 (TKRGGWAKGRKRKKP) show a composition bias toward basic residues. Positions 104–172 (PKSPLTGYVR…RYMRELEQYQ (69 aa)) form a DNA-binding region, HMG box. Over residues 183–213 (KAQDRQKGKLHRQDGARQPVHDHEKEADTKE) the composition is skewed to basic and acidic residues. A coiled-coil region spans residues 230-274 (SKAREAELRQLRKSNMEFEERNAALQKHVESMRTAVEKLEVDVIQ).

The protein resides in the nucleus. In terms of biological role, plays a role in neuronal differentiation. This chain is High mobility group protein 20A (HMG20A), found in Gallus gallus (Chicken).